We begin with the raw amino-acid sequence, 347 residues long: Uroporphyrinogen decarboxylase (347 aa).

Substrate contacts are provided by residues 24 to 28, F42, D73, Y150, T205, and H320; that span reads RQAGR.

This sequence belongs to the uroporphyrinogen decarboxylase family. In terms of assembly, homodimer.

It localises to the cytoplasm. The catalysed reaction is uroporphyrinogen III + 4 H(+) = coproporphyrinogen III + 4 CO2. It functions in the pathway porphyrin-containing compound metabolism; protoporphyrin-IX biosynthesis; coproporphyrinogen-III from 5-aminolevulinate: step 4/4. Functionally, catalyzes the decarboxylation of four acetate groups of uroporphyrinogen-III to yield coproporphyrinogen-III. The chain is Uroporphyrinogen decarboxylase from Gloeobacter violaceus (strain ATCC 29082 / PCC 7421).